A 795-amino-acid polypeptide reads, in one-letter code: Phenylalanine--tRNA ligase beta subunit (795 aa).

In terms of domain architecture, tRNA-binding spans 39-148; sequence AGQFHGVVVG…IDAPLGVDLR (110 aa). The 76-residue stretch at 401 to 476 folds into the B5 domain; it reads PQSATITLRR…RIYGYNNIPD (76 aa). Residues Asp454, Asp460, Glu463, and Glu464 each contribute to the Mg(2+) site. Residues 701–794 enclose the FDX-ACB domain; it reads SRFPSNRRDI…LKQRFQASLR (94 aa).

The protein belongs to the phenylalanyl-tRNA synthetase beta subunit family. Type 1 subfamily. As to quaternary structure, tetramer of two alpha and two beta subunits. It depends on Mg(2+) as a cofactor.

It is found in the cytoplasm. It carries out the reaction tRNA(Phe) + L-phenylalanine + ATP = L-phenylalanyl-tRNA(Phe) + AMP + diphosphate + H(+). In Photorhabdus laumondii subsp. laumondii (strain DSM 15139 / CIP 105565 / TT01) (Photorhabdus luminescens subsp. laumondii), this protein is Phenylalanine--tRNA ligase beta subunit.